We begin with the raw amino-acid sequence, 54 residues long: Apelin receptor early endogenous ligand (54 aa).

The first 25 residues, 1-25 (MRFQPLFWVFFIFAMSLLFITEEKS), serve as a signal peptide directing secretion.

This sequence belongs to the Elabela/Toddler family. In terms of assembly, interacts with APLNR.

It is found in the secreted. Its subcellular location is the extracellular space. Peptide hormone that functions as endogenous ligand for the G-protein-coupled apelin receptor (APLNR/APJ), that plays a role in the regulation of normal cardiovascular function and fluid homeostasis. Functions as a balanced agonist activating both G(i) protein pathway and beta-arrestin pathway of APLNR. Downstream G proteins activation, apelin can inhibit cAMP production and activate key intracellular effectors such as ERKs. On the other hand, APLNR activation induces beta-arrestin recruitment to the membrane leading to desensitization and internalization of the receptor. Required for mesendodermal differentiation, blood vessels formation and heart morphogenesis during early development and for adult cardiovascular homeostasis. Acts as a motogen by promoting mesendodermal cell migration during gastrulation by binding and activating APLNR. Acts as an early embryonic regulator of cellular movement with a role in migration and development of cardiac progenitor cells. May act as a chemoattractant for the activation of angioblast migration toward the embryonic midline, i.e. the position of the future vessel formation, during vasculogenesis. Positively regulates sinus venosus (SV)-derived endothelial cells migration into the developing heart to promote coronary blood vessel sprouting. Plays a role in placental vascular development; promotes placental trophoblast invasion and spiral artery remodeling in the uterus. Involved in the regulation of maternal cardiovascular homeostasis to prevent gestational hypertension and for potent cardioprotective functions during heart failure. Mediates myocardial contractility in an ERK1/2-dependent manner. This is Apelin receptor early endogenous ligand from Rattus norvegicus (Rat).